The chain runs to 296 residues: Acetylglutamate kinase (296 aa).

Residues 69 to 70, Arg91, and Asn193 each bind substrate; that span reads GG.

It belongs to the acetylglutamate kinase family. ArgB subfamily.

It is found in the cytoplasm. The enzyme catalyses N-acetyl-L-glutamate + ATP = N-acetyl-L-glutamyl 5-phosphate + ADP. It functions in the pathway amino-acid biosynthesis; L-arginine biosynthesis; N(2)-acetyl-L-ornithine from L-glutamate: step 2/4. Its function is as follows. Catalyzes the ATP-dependent phosphorylation of N-acetyl-L-glutamate. The sequence is that of Acetylglutamate kinase from Albidiferax ferrireducens (strain ATCC BAA-621 / DSM 15236 / T118) (Rhodoferax ferrireducens).